The primary structure comprises 435 residues: Xylose isomerase (435 aa).

Catalysis depends on residues histidine 100 and aspartate 103. The Mg(2+) site is built by glutamate 231, glutamate 267, histidine 270, aspartate 295, aspartate 306, aspartate 308, and aspartate 338.

Belongs to the xylose isomerase family. As to quaternary structure, homotetramer. Mg(2+) serves as cofactor.

The protein resides in the cytoplasm. The enzyme catalyses alpha-D-xylose = alpha-D-xylulofuranose. This Brucella suis biovar 1 (strain 1330) protein is Xylose isomerase.